We begin with the raw amino-acid sequence, 38 residues long: Large ribosomal subunit protein bL36c (38 aa).

This sequence belongs to the bacterial ribosomal protein bL36 family.

It is found in the plastid. The protein localises to the chloroplast. The sequence is that of Large ribosomal subunit protein bL36c (rpl36) from Mesostigma viride (Green alga).